A 616-amino-acid polypeptide reads, in one-letter code: Dihydroxy-acid dehydratase (616 aa).

Asp-81 lines the Mg(2+) pocket. A [2Fe-2S] cluster-binding site is contributed by Cys-122. The Mg(2+) site is built by Asp-123 and Lys-124. Lys-124 carries the post-translational modification N6-carboxylysine. Residue Cys-195 participates in [2Fe-2S] cluster binding. A Mg(2+)-binding site is contributed by Glu-491. The Proton acceptor role is filled by Ser-517.

This sequence belongs to the IlvD/Edd family. As to quaternary structure, homodimer. Requires [2Fe-2S] cluster as cofactor. The cofactor is Mg(2+).

The enzyme catalyses (2R)-2,3-dihydroxy-3-methylbutanoate = 3-methyl-2-oxobutanoate + H2O. It carries out the reaction (2R,3R)-2,3-dihydroxy-3-methylpentanoate = (S)-3-methyl-2-oxopentanoate + H2O. It participates in amino-acid biosynthesis; L-isoleucine biosynthesis; L-isoleucine from 2-oxobutanoate: step 3/4. The protein operates within amino-acid biosynthesis; L-valine biosynthesis; L-valine from pyruvate: step 3/4. Functionally, functions in the biosynthesis of branched-chain amino acids. Catalyzes the dehydration of (2R,3R)-2,3-dihydroxy-3-methylpentanoate (2,3-dihydroxy-3-methylvalerate) into 2-oxo-3-methylpentanoate (2-oxo-3-methylvalerate) and of (2R)-2,3-dihydroxy-3-methylbutanoate (2,3-dihydroxyisovalerate) into 2-oxo-3-methylbutanoate (2-oxoisovalerate), the penultimate precursor to L-isoleucine and L-valine, respectively. This is Dihydroxy-acid dehydratase from Salmonella typhi.